The primary structure comprises 356 residues: UDP-N-acetylglucosamine--N-acetylmuramyl-(pentapeptide) pyrophosphoryl-undecaprenol N-acetylglucosamine transferase (356 aa).

Residues 12–14 (TGG), N124, R163, S188, I242, 261–266 (ALTVSE), and Q287 each bind UDP-N-acetyl-alpha-D-glucosamine.

It belongs to the glycosyltransferase 28 family. MurG subfamily.

Its subcellular location is the cell inner membrane. The enzyme catalyses di-trans,octa-cis-undecaprenyl diphospho-N-acetyl-alpha-D-muramoyl-L-alanyl-D-glutamyl-meso-2,6-diaminopimeloyl-D-alanyl-D-alanine + UDP-N-acetyl-alpha-D-glucosamine = di-trans,octa-cis-undecaprenyl diphospho-[N-acetyl-alpha-D-glucosaminyl-(1-&gt;4)]-N-acetyl-alpha-D-muramoyl-L-alanyl-D-glutamyl-meso-2,6-diaminopimeloyl-D-alanyl-D-alanine + UDP + H(+). It functions in the pathway cell wall biogenesis; peptidoglycan biosynthesis. Functionally, cell wall formation. Catalyzes the transfer of a GlcNAc subunit on undecaprenyl-pyrophosphoryl-MurNAc-pentapeptide (lipid intermediate I) to form undecaprenyl-pyrophosphoryl-MurNAc-(pentapeptide)GlcNAc (lipid intermediate II). This is UDP-N-acetylglucosamine--N-acetylmuramyl-(pentapeptide) pyrophosphoryl-undecaprenol N-acetylglucosamine transferase from Ectopseudomonas mendocina (strain ymp) (Pseudomonas mendocina).